The sequence spans 72 residues: BBSome-interacting protein 1 (72 aa).

The protein belongs to the BBIP10 family.

The protein localises to the cell projection. Its subcellular location is the cilium. It is found in the cytoplasm. In terms of biological role, required for primary cilia assembly. The chain is BBSome-interacting protein 1 (bbip1) from Danio rerio (Zebrafish).